We begin with the raw amino-acid sequence, 337 residues long: 1-aminocyclopropane-1-carboxylate deaminase (337 aa).

An N6-(pyridoxal phosphate)lysine modification is found at K50. The active-site Nucleophile is S77.

It belongs to the ACC deaminase/D-cysteine desulfhydrase family. In terms of assembly, homotrimer. It depends on pyridoxal 5'-phosphate as a cofactor.

The enzyme catalyses 1-aminocyclopropane-1-carboxylate + H2O = 2-oxobutanoate + NH4(+). Catalyzes a cyclopropane ring-opening reaction, the irreversible conversion of 1-aminocyclopropane-1-carboxylate (ACC) to ammonia and alpha-ketobutyrate. Allows growth on ACC as a nitrogen source. This is 1-aminocyclopropane-1-carboxylate deaminase from Methylobacterium nodulans (strain LMG 21967 / CNCM I-2342 / ORS 2060).